Here is a 284-residue protein sequence, read N- to C-terminus: 4-diphosphocytidyl-2-C-methyl-D-erythritol kinase (284 aa).

Lys-9 is an active-site residue. Residue 92–102 participates in ATP binding; it reads PMGGGIGGGSS. Residue Asp-134 is part of the active site.

The protein belongs to the GHMP kinase family. IspE subfamily.

It catalyses the reaction 4-CDP-2-C-methyl-D-erythritol + ATP = 4-CDP-2-C-methyl-D-erythritol 2-phosphate + ADP + H(+). The protein operates within isoprenoid biosynthesis; isopentenyl diphosphate biosynthesis via DXP pathway; isopentenyl diphosphate from 1-deoxy-D-xylulose 5-phosphate: step 3/6. Functionally, catalyzes the phosphorylation of the position 2 hydroxy group of 4-diphosphocytidyl-2C-methyl-D-erythritol. This chain is 4-diphosphocytidyl-2-C-methyl-D-erythritol kinase, found in Stutzerimonas stutzeri (strain A1501) (Pseudomonas stutzeri).